Consider the following 473-residue polypeptide: Serine/threonine-protein phosphatase T (473 aa).

3 TPR repeats span residues 5–38 (ALEL…DSTN), 40–72 (ILYS…DPEY), and 73–106 (AKAY…APSD). The catalytic stretch occupies residues 159-472 (KQITKEFVED…MAYANGLLSG (314 aa)). Residues aspartate 217, histidine 219, aspartate 246, and asparagine 278 each contribute to the Mn(2+) site. The active-site Proton donor/acceptor is histidine 279. Mn(2+)-binding residues include histidine 327 and histidine 404.

The protein belongs to the PPP phosphatase family. PP-5 (PP-T) subfamily. Requires Mg(2+) as cofactor. Mn(2+) is required as a cofactor.

Its subcellular location is the nucleus. The catalysed reaction is O-phospho-L-seryl-[protein] + H2O = L-seryl-[protein] + phosphate. It carries out the reaction O-phospho-L-threonyl-[protein] + H2O = L-threonyl-[protein] + phosphate. Its function is as follows. Protein phosphatase that specifically binds to and dephosphorylates the molecular chaperone Hsp90. Dephosphorylation positively regulates the Hsp90 chaperone machinery. This is Serine/threonine-protein phosphatase T (ppt1) from Schizosaccharomyces pombe (strain 972 / ATCC 24843) (Fission yeast).